A 663-amino-acid chain; its full sequence is Transketolase 2 (663 aa).

H25 contacts substrate. Thiamine diphosphate contacts are provided by residues H65 and G113–L115. Position 154 (D154) interacts with Mg(2+). Thiamine diphosphate-binding residues include G155 and N184. Mg(2+)-binding residues include N184 and I186. Positions 259, 356, and 383 each coordinate substrate. H259 serves as a coordination point for thiamine diphosphate. The Proton donor role is filled by E410. F436 provides a ligand contact to thiamine diphosphate. The substrate site is built by H460, D468, and R519.

It belongs to the transketolase family. In terms of assembly, homodimer. Mg(2+) serves as cofactor. Requires Ca(2+) as cofactor. It depends on Mn(2+) as a cofactor. The cofactor is Co(2+). Thiamine diphosphate is required as a cofactor.

It catalyses the reaction D-sedoheptulose 7-phosphate + D-glyceraldehyde 3-phosphate = aldehydo-D-ribose 5-phosphate + D-xylulose 5-phosphate. Functionally, catalyzes the transfer of a two-carbon ketol group from a ketose donor to an aldose acceptor, via a covalent intermediate with the cofactor thiamine pyrophosphate. In Vibrio parahaemolyticus serotype O3:K6 (strain RIMD 2210633), this protein is Transketolase 2 (tkt2).